We begin with the raw amino-acid sequence, 437 residues long: UDP-glucose 6-dehydrogenase (437 aa).

NAD(+)-binding residues include Val-11, Asp-30, Lys-35, Thr-86, Thr-122, and Glu-155. Substrate-binding positions include 151-155 (EFLRE), Lys-209, Asn-213, 254-258 (FLHAG), and Gly-262. Residue Cys-265 is the Nucleophile of the active site. An NAD(+)-binding site is contributed by Lys-268. Lys-326 is a substrate binding site. Arg-333 contributes to the NAD(+) binding site.

This sequence belongs to the UDP-glucose/GDP-mannose dehydrogenase family.

It catalyses the reaction UDP-alpha-D-glucose + 2 NAD(+) + H2O = UDP-alpha-D-glucuronate + 2 NADH + 3 H(+). It participates in nucleotide-sugar biosynthesis; UDP-alpha-D-glucuronate biosynthesis; UDP-alpha-D-glucuronate from UDP-alpha-D-glucose: step 1/1. The protein operates within capsule biogenesis; capsule polysaccharide biosynthesis. The polypeptide is UDP-glucose 6-dehydrogenase (Rhizobium meliloti (strain 1021) (Ensifer meliloti)).